The chain runs to 116 residues: U30-theraphotoxin-Cg1a (116 aa).

An N-terminal signal peptide occupies residues 1–17 (MKLCVLTIASLLVTVTS). The propeptide occupies 18-53 (LETQKEIAEGSELTREETPSLVEHKEDEAAAASEKR). Positions 24 to 46 (IAEGSELTREETPSLVEHKEDEA) are disordered. 4 disulfide bridges follow: Cys55-Cys69, Cys62-Cys75, Cys66-Cys112, and Cys68-Cys88.

This sequence belongs to the neurotoxin 03 (Tx2) family. 02 subfamily. HNTX-XV sub-subfamily. As to expression, expressed by the venom gland.

It is found in the secreted. Its function is as follows. Probable ion channel inhibitor. The sequence is that of U30-theraphotoxin-Cg1a from Chilobrachys guangxiensis (Chinese earth tiger tarantula).